A 258-amino-acid polypeptide reads, in one-letter code: UPF0246 protein YaaA (258 aa).

This sequence belongs to the UPF0246 family.

The protein is UPF0246 protein YaaA of Shigella dysenteriae serotype 1 (strain Sd197).